Here is a 266-residue protein sequence, read N- to C-terminus: Undecaprenyl-diphosphatase (266 aa).

Helical transmembrane passes span 4 to 24 (ILRV…PISS), 39 to 59 (LPIV…IIYY), 88 to 108 (LNLI…GIFI), 114 to 134 (LFTF…LFLI), 147 to 167 (IFFS…PGIS), 186 to 206 (SLEI…FLKY), 214 to 234 (IIFN…FGLF), and 246 to 266 (SKLY…YFLV).

Belongs to the UppP family.

Its subcellular location is the cell inner membrane. It carries out the reaction di-trans,octa-cis-undecaprenyl diphosphate + H2O = di-trans,octa-cis-undecaprenyl phosphate + phosphate + H(+). Functionally, catalyzes the dephosphorylation of undecaprenyl diphosphate (UPP). Confers resistance to bacitracin. The sequence is that of Undecaprenyl-diphosphatase from Borrelia recurrentis (strain A1).